Here is a 129-residue protein sequence, read N- to C-terminus: Succinate dehydrogenase assembly factor 3, mitochondrial (129 aa).

The protein belongs to the complex I LYR family. SDHAF3 subfamily. In terms of assembly, interacts with the iron-sulfur protein subunit within the SDH catalytic dimer.

Its subcellular location is the mitochondrion matrix. Plays an essential role in the assembly of succinate dehydrogenase (SDH), an enzyme complex (also referred to as respiratory complex II) that is a component of both the tricarboxylic acid (TCA) cycle and the mitochondrial electron transport chain, and which couples the oxidation of succinate to fumarate with the reduction of ubiquinone (coenzyme Q) to ubiquinol. Promotes maturation of the iron-sulfur protein subunit of the SDH catalytic dimer, protecting it from the deleterious effects of oxidants. May act together with SDHAF1. This chain is Succinate dehydrogenase assembly factor 3, mitochondrial, found in Aspergillus fumigatus (strain ATCC MYA-4609 / CBS 101355 / FGSC A1100 / Af293) (Neosartorya fumigata).